The primary structure comprises 311 residues: 3-dehydro-scyllo-inosose hydrolase (311 aa).

Positions 35, 37, 46, 117, and 173 each coordinate Zn(2+).

It belongs to the creatininase superfamily. Homotrimer. It depends on Zn(2+) as a cofactor.

It catalyses the reaction 3-dehydro-scyllo-inosose + H2O = 5-dehydro-L-gluconate + H(+). The protein operates within polyol metabolism; myo-inositol metabolism. Its function is as follows. Catalyzes the ring-opening hydrolysis of 3-dehydro-scyllo-inosose (diketo-inositol) to 5-dehydro-L-gluconate, and thus probably functions in a myo-inositol degradation pathway together with IolG, IolM and IolO. This is 3-dehydro-scyllo-inosose hydrolase from Thermotoga maritima (strain ATCC 43589 / DSM 3109 / JCM 10099 / NBRC 100826 / MSB8).